A 96-amino-acid polypeptide reads, in one-letter code: Aspartyl/glutamyl-tRNA(Asn/Gln) amidotransferase subunit C (96 aa).

The protein belongs to the GatC family. In terms of assembly, heterotrimer of A, B and C subunits.

It catalyses the reaction L-glutamyl-tRNA(Gln) + L-glutamine + ATP + H2O = L-glutaminyl-tRNA(Gln) + L-glutamate + ADP + phosphate + H(+). It carries out the reaction L-aspartyl-tRNA(Asn) + L-glutamine + ATP + H2O = L-asparaginyl-tRNA(Asn) + L-glutamate + ADP + phosphate + 2 H(+). Allows the formation of correctly charged Asn-tRNA(Asn) or Gln-tRNA(Gln) through the transamidation of misacylated Asp-tRNA(Asn) or Glu-tRNA(Gln) in organisms which lack either or both of asparaginyl-tRNA or glutaminyl-tRNA synthetases. The reaction takes place in the presence of glutamine and ATP through an activated phospho-Asp-tRNA(Asn) or phospho-Glu-tRNA(Gln). This chain is Aspartyl/glutamyl-tRNA(Asn/Gln) amidotransferase subunit C, found in Deinococcus deserti (strain DSM 17065 / CIP 109153 / LMG 22923 / VCD115).